A 191-amino-acid chain; its full sequence is Orotate phosphoribosyltransferase (191 aa).

Position 114–122 (114–122) interacts with 5-phospho-alpha-D-ribose 1-diphosphate; the sequence is EDVVTTGKS. Positions 118 and 146 each coordinate orotate.

This sequence belongs to the purine/pyrimidine phosphoribosyltransferase family. PyrE subfamily. Homodimer. It depends on Mg(2+) as a cofactor.

The enzyme catalyses orotidine 5'-phosphate + diphosphate = orotate + 5-phospho-alpha-D-ribose 1-diphosphate. It participates in pyrimidine metabolism; UMP biosynthesis via de novo pathway; UMP from orotate: step 1/2. Its function is as follows. Catalyzes the transfer of a ribosyl phosphate group from 5-phosphoribose 1-diphosphate to orotate, leading to the formation of orotidine monophosphate (OMP). The chain is Orotate phosphoribosyltransferase from Clostridium botulinum (strain Loch Maree / Type A3).